The chain runs to 295 residues: N-acetylmuramic acid 6-phosphate etherase (295 aa).

In terms of domain architecture, SIS spans 53–216 (TTEQFKQGGR…STITMVGVGK (164 aa)). The Proton donor role is filled by Glu-81. Glu-112 is a catalytic residue.

Belongs to the GCKR-like family. MurNAc-6-P etherase subfamily. Homodimer.

It carries out the reaction N-acetyl-D-muramate 6-phosphate + H2O = N-acetyl-D-glucosamine 6-phosphate + (R)-lactate. It functions in the pathway amino-sugar metabolism; N-acetylmuramate degradation. Functionally, specifically catalyzes the cleavage of the D-lactyl ether substituent of MurNAc 6-phosphate, producing GlcNAc 6-phosphate and D-lactate. This is N-acetylmuramic acid 6-phosphate etherase from Staphylococcus saprophyticus subsp. saprophyticus (strain ATCC 15305 / DSM 20229 / NCIMB 8711 / NCTC 7292 / S-41).